The sequence spans 507 residues: Cuticlin-4 (507 aa).

Positions 1-19 (MFHFTRILAAFLLPTLCFC) are cleaved as a signal peptide. The Extracellular segment spans residues 20–471 (GYSTAPSSTV…KTCFSTSRMY (452 aa)). Residues 42–280 (VCETASISLL…YGCSNTQPQC (239 aa)) enclose the ZP domain. The tract at residues 292–350 (KTTETAEPYPYDSHESGYPTRPANYPVASSRYPIPTTQAPASYPSSPAPPPPGADIDNG) is disordered. N-linked (GlcNAc...) asparagine glycans are attached at residues Asn-374 and Asn-408. The chain crosses the membrane as a helical span at residues 472 to 492 (FTLILLCLLFATTVVVFIVIV). Residues 493-507 (QKQRQILAQTAFFKP) lie on the Cytoplasmic side of the membrane.

It localises to the cell membrane. Plays a role in alae formation and subsequent cuticle attachment in adults. The polypeptide is Cuticlin-4 (Caenorhabditis elegans).